The sequence spans 563 residues: NAD(P)H-quinone oxidoreductase chain 4 (563 aa).

The next 15 helical transmembrane spans lie at 25-45 (FPWLSLSILFPIVGAFLVPFI), 56-76 (WFALGIALVTFVITVAAYLYG), 90-110 (VSWLPDLGLTWAVGADGISMP), 111-131 (LILLTSFITALAVLAAWPVTF), 133-153 (PKLFFFLILAMDGGQIAVFAV), 157-177 (LLFFLAWELELLPVYLLLAIW), 189-209 (FIIYTAGSSLFILLVALAMGF), 230-250 (GFQLLCYAGLLIAFGVKLPIV), 264-284 (TAPVHMLLAGILLKMGGYALM), 298-318 (FAPLLIVLGVVNIIYAALTSF), 335-355 (MGFVLIGIGSFSALGTSGAML), 356-376 (QMISHGLIGASLFFLVGATYD), 397-417 (FALWTVCALASLALPGMSGFV), 438-458 (IVIAGLAAIGVILTPIYLLSM), and 485-505 (VYIISCLLVPIIGIGLYPRLM).

Belongs to the complex I subunit 4 family.

Its subcellular location is the cellular thylakoid membrane. It carries out the reaction a plastoquinone + NADH + (n+1) H(+)(in) = a plastoquinol + NAD(+) + n H(+)(out). It catalyses the reaction a plastoquinone + NADPH + (n+1) H(+)(in) = a plastoquinol + NADP(+) + n H(+)(out). NDH-1 shuttles electrons from NAD(P)H, via FMN and iron-sulfur (Fe-S) centers, to quinones in the respiratory chain. The immediate electron acceptor for the enzyme in this species is believed to be plastoquinone. Couples the redox reaction to proton translocation (for every two electrons transferred, four hydrogen ions are translocated across the cytoplasmic membrane), and thus conserves the redox energy in a proton gradient. In Prochlorococcus marinus (strain MIT 9303), this protein is NAD(P)H-quinone oxidoreductase chain 4.